Consider the following 517-residue polypeptide: Probable anion transporter 6, chloroplastic (517 aa).

The tract at residues 51 to 73 (TERVRESKKLPPKDPIEDPKPQL) is disordered. Residues 52-70 (ERVRESKKLPPKDPIEDPK) show a composition bias toward basic and acidic residues. A run of 10 helical transmembrane segments spans residues 130–150 (FGWS…GYAL), 170–190 (IGVF…GFMP), 229–249 (FVFG…PPII), 255–275 (ESVF…FQFL), 312–332 (SFFQ…GSWG), 352–372 (LTEA…VTSL), 397–417 (IAFV…GLPP), 420–440 (IVGI…GLYC), 452–472 (ILLG…VALT), and 484–504 (MSLF…WLAF).

It belongs to the major facilitator superfamily. Sodium/anion cotransporter (TC 2.A.1.14) family. As to expression, expressed in leaf veins and sepals.

It localises to the plastid. The protein resides in the chloroplast membrane. Functionally, inorganic phosphate and probable anion transporter. In Arabidopsis thaliana (Mouse-ear cress), this protein is Probable anion transporter 6, chloroplastic (ANTR6).